Consider the following 186-residue polypeptide: UPF0397 protein lp_0150 (186 aa).

Transmembrane regions (helical) follow at residues 12 to 32, 45 to 65, 76 to 96, 112 to 132, and 151 to 171; these read VVAT…VAIP, GFLA…AVFI, GSPW…FGLA, LVWF…LLAP, and VITW…LLVL.

The protein belongs to the UPF0397 family.

The protein localises to the cell membrane. This is UPF0397 protein lp_0150 from Lactiplantibacillus plantarum (strain ATCC BAA-793 / NCIMB 8826 / WCFS1) (Lactobacillus plantarum).